The sequence spans 565 residues: NAD-dependent malic enzyme (565 aa).

The active-site Proton donor is tyrosine 104. Position 157 (arginine 157) interacts with NAD(+). The Proton acceptor role is filled by lysine 175. Positions 246, 247, and 270 each coordinate a divalent metal cation. NAD(+) is bound by residues aspartate 270 and asparagine 418.

The protein belongs to the malic enzymes family. Homotetramer. Mg(2+) is required as a cofactor. It depends on Mn(2+) as a cofactor.

It carries out the reaction (S)-malate + NAD(+) = pyruvate + CO2 + NADH. It catalyses the reaction oxaloacetate + H(+) = pyruvate + CO2. This is NAD-dependent malic enzyme from Escherichia coli O6:H1 (strain CFT073 / ATCC 700928 / UPEC).